The primary structure comprises 244 residues: Phosphoadenosine 5'-phosphosulfate reductase (244 aa).

C239 acts as the Nucleophile; cysteine thiosulfonate intermediate in catalysis.

The protein belongs to the PAPS reductase family. CysH subfamily.

The protein resides in the cytoplasm. It carries out the reaction [thioredoxin]-disulfide + sulfite + adenosine 3',5'-bisphosphate + 2 H(+) = [thioredoxin]-dithiol + 3'-phosphoadenylyl sulfate. It functions in the pathway sulfur metabolism; hydrogen sulfide biosynthesis; sulfite from sulfate: step 3/3. Its function is as follows. Catalyzes the formation of sulfite from phosphoadenosine 5'-phosphosulfate (PAPS) using thioredoxin as an electron donor. This chain is Phosphoadenosine 5'-phosphosulfate reductase, found in Salmonella paratyphi A (strain AKU_12601).